Here is a 155-residue protein sequence, read N- to C-terminus: D-aminoacyl-tRNA deacylase (155 aa).

The short motif at 137 to 138 (GP) is the Gly-cisPro motif, important for rejection of L-amino acids element.

This sequence belongs to the DTD family. Homodimer.

The protein localises to the cytoplasm. It carries out the reaction glycyl-tRNA(Ala) + H2O = tRNA(Ala) + glycine + H(+). It catalyses the reaction a D-aminoacyl-tRNA + H2O = a tRNA + a D-alpha-amino acid + H(+). In terms of biological role, an aminoacyl-tRNA editing enzyme that deacylates mischarged D-aminoacyl-tRNAs. Also deacylates mischarged glycyl-tRNA(Ala), protecting cells against glycine mischarging by AlaRS. Acts via tRNA-based rather than protein-based catalysis; rejects L-amino acids rather than detecting D-amino acids in the active site. By recycling D-aminoacyl-tRNA to D-amino acids and free tRNA molecules, this enzyme counteracts the toxicity associated with the formation of D-aminoacyl-tRNA entities in vivo and helps enforce protein L-homochirality. This Paracidovorax citrulli (strain AAC00-1) (Acidovorax citrulli) protein is D-aminoacyl-tRNA deacylase.